The primary structure comprises 455 residues: Anthocyanidin 3-O-glucosyltransferase (455 aa).

Catalysis depends on His-18, which acts as the Proton acceptor. His-18 contributes to the an anthocyanidin binding site. Asp-118 functions as the Charge relay in the catalytic mechanism. UDP-alpha-D-glucose is bound at residue Thr-139. Residue His-148 coordinates an anthocyanidin. The UDP-alpha-D-glucose site is built by Ala-336, Gln-338, His-353, Trp-356, Ser-358, and Glu-361. An anthocyanidin is bound at residue Gly-376. The UDP-alpha-D-glucose site is built by Asp-377 and Gln-378.

The protein belongs to the UDP-glycosyltransferase family.

The catalysed reaction is an anthocyanidin + UDP-alpha-D-glucose + H(+) = an anthocyanidin 3-O-beta-D-glucoside + UDP. Its pathway is pigment biosynthesis; anthocyanin biosynthesis. Its function is as follows. In the presence of other necessary color factors, this glycosylation reaction allows the accumulation of anthocyanin pigments. The polypeptide is Anthocyanidin 3-O-glucosyltransferase (BZ1) (Hordeum vulgare (Barley)).